The primary structure comprises 116 residues: Photosystem II assembly factor Psb28 protein (116 aa).

Belongs to the Psb28 family. Part of a photosystem II (PSII) assembly intermediate complex PSII-I; crystallized from a strain deleted of psbJ, it forms monomeric PSII before addition of the oxygen evolving complex. PSII-I includes 3 assembly factors not found in mature PSII (Psb27, Psb28 and Psb34). This protein binds to the cytoplasmic face of D1 and D2 (psbA and psbD), contacting CP47 (psbB) directly above the quinone b-binding site.

The protein localises to the cellular thylakoid membrane. Its function is as follows. A photosystem II (PSII) assembly factor that binds PSII during biogenesis, protecting the complex until water splitting is activated. The chain is Photosystem II assembly factor Psb28 protein from Thermosynechococcus vestitus (strain NIES-2133 / IAM M-273 / BP-1).